We begin with the raw amino-acid sequence, 313 residues long: Homeobox protein CDX-2 (313 aa).

Residue S60 is modified to Phosphoserine. The tract at residues 113-153 (HAHHHPHHHPHHPAAAPSCASGLLQTLNPGPPGPAATGAAE) is disordered. Residues 114–124 (AHHHPHHHPHH) are compositionally biased toward basic residues. Positions 185 to 215 (KDKYRVVYTDHQRLELEKEFHYSRYITIRRK) are interaction with DNA. The segment at residues 185 to 244 (KDKYRVVYTDHQRLELEKEFHYSRYITIRRKAELAATLGLSERQVKIWFQNRRAKERKIN) is a DNA-binding region (homeobox). Positions 227–241 (RQVKIWFQNRRAKER) are interaction with 5-mCpG DNA. The disordered stretch occupies residues 242–313 (KINKKKLQQQ…GGVLNPTVTQ (72 aa)). Composition is skewed to low complexity over residues 249-261 (QQQQ…QQLA) and 271-300 (QPGS…PGVL). S283 carries the post-translational modification Phosphoserine. Residues 283–295 (SPVSSLQGSVPGS) carry the 4S motif; modulates transactivation activity and protein stability motif.

Belongs to the Caudal homeobox family. In terms of assembly, can bind DNA as a monomer or homodimer. In terms of processing, ubiquitinated, leading to its degradation by the proteasome. Post-translationally, phosphorylation at Ser-60 reduces transactivation capacity. Phosphorylation at Ser-283 reduces transactivation capacity and also increases ubiquitin-dependent proteasome degradation. Expressed in the intestine.

Its subcellular location is the nucleus. Its function is as follows. Transcription factor which regulates the transcription of multiple genes expressed in the intestinal epithelium. Binds to the promoter of the intestinal sucrase-isomaltase SI and activates SI transcription. Binds to the DNA sequence 5'-ATAAAAACTTAT-3' in the promoter region of VDR and activates VDR transcription. Binds to and activates transcription of LPH. Activates transcription of CLDN2 and intestinal mucin MUC2. Binds to the 5'-AATTTTTTACAACACCT-3' DNA sequence in the promoter region of CA1 and activates CA1 transcription. Important in broad range of functions from early differentiation to maintenance of the intestinal epithelial lining of both the small and large intestine. Binds preferentially to methylated DNA. The sequence is that of Homeobox protein CDX-2 (CDX2) from Mesocricetus auratus (Golden hamster).